The following is a 30-amino-acid chain: U5-ctenitoxin-Pk1b (30 aa).

Intrachain disulfides connect cysteine 6-cysteine 23 and cysteine 13-cysteine 29.

The protein belongs to the neurotoxin 04 (omega-agtx) family. 02 (Tx1) subfamily. Expressed by the venom gland.

Its subcellular location is the secreted. In terms of biological role, lethal neurotoxin. Causes spastic paralysis and death in mice in 4-6 minutes after intracerebroventricular injection at dose levels of 1.5 ug per mouse. The sequence is that of U5-ctenitoxin-Pk1b from Phoneutria keyserlingi (Brazilian wandering spider).